Reading from the N-terminus, the 296-residue chain is Diheme cytochrome c-type (296 aa).

Residues Cys-52, Cys-55, His-56, Cys-202, Cys-205, and His-206 each contribute to the heme c site.

In terms of processing, binds 2 heme c groups covalently per subunit.

It localises to the cell membrane. Functionally, particularly expressed when cells generate energy via aerobic respiration. This chain is Diheme cytochrome c-type (cycG), found in Cereibacter sphaeroides (strain ATCC 17023 / DSM 158 / JCM 6121 / CCUG 31486 / LMG 2827 / NBRC 12203 / NCIMB 8253 / ATH 2.4.1.) (Rhodobacter sphaeroides).